A 421-amino-acid polypeptide reads, in one-letter code: Tyrosine--tRNA ligase 1 (421 aa).

Residue Y35 coordinates L-tyrosine. A 'HIGH' region motif is present at residues 40–49 (PTADSLHIGH). The L-tyrosine site is built by Y170 and Q174. Residues 231–235 (KFGKT) carry the 'KMSKS' region motif. K234 contacts ATP. Residues 354 to 420 (LPLVEILVQS…GKKKYFLLTY (67 aa)) enclose the S4 RNA-binding domain.

It belongs to the class-I aminoacyl-tRNA synthetase family. TyrS type 1 subfamily. As to quaternary structure, homodimer.

Its subcellular location is the cytoplasm. The enzyme catalyses tRNA(Tyr) + L-tyrosine + ATP = L-tyrosyl-tRNA(Tyr) + AMP + diphosphate + H(+). In terms of biological role, catalyzes the attachment of tyrosine to tRNA(Tyr) in a two-step reaction: tyrosine is first activated by ATP to form Tyr-AMP and then transferred to the acceptor end of tRNA(Tyr). The protein is Tyrosine--tRNA ligase 1 of Bacillus licheniformis (strain ATCC 14580 / DSM 13 / JCM 2505 / CCUG 7422 / NBRC 12200 / NCIMB 9375 / NCTC 10341 / NRRL NRS-1264 / Gibson 46).